A 348-amino-acid polypeptide reads, in one-letter code: Holliday junction branch migration complex subunit RuvB (348 aa).

The interval alanine 4–tyrosine 184 is large ATPase domain (RuvB-L). Residues isoleucine 23, arginine 24, glycine 65, lysine 68, threonine 69, threonine 70, glutamate 131–phenylalanine 133, arginine 174, tyrosine 184, and arginine 221 each bind ATP. Threonine 69 contributes to the Mg(2+) binding site. Residues serine 185–aspartate 255 form a small ATPAse domain (RuvB-S) region. Residues glutamate 258 to glutamate 348 are head domain (RuvB-H). Residues arginine 294, arginine 313, and arginine 318 each coordinate DNA.

The protein belongs to the RuvB family. As to quaternary structure, homohexamer. Forms an RuvA(8)-RuvB(12)-Holliday junction (HJ) complex. HJ DNA is sandwiched between 2 RuvA tetramers; dsDNA enters through RuvA and exits via RuvB. An RuvB hexamer assembles on each DNA strand where it exits the tetramer. Each RuvB hexamer is contacted by two RuvA subunits (via domain III) on 2 adjacent RuvB subunits; this complex drives branch migration. In the full resolvosome a probable DNA-RuvA(4)-RuvB(12)-RuvC(2) complex forms which resolves the HJ.

It localises to the cytoplasm. It carries out the reaction ATP + H2O = ADP + phosphate + H(+). Functionally, the RuvA-RuvB-RuvC complex processes Holliday junction (HJ) DNA during genetic recombination and DNA repair, while the RuvA-RuvB complex plays an important role in the rescue of blocked DNA replication forks via replication fork reversal (RFR). RuvA specifically binds to HJ cruciform DNA, conferring on it an open structure. The RuvB hexamer acts as an ATP-dependent pump, pulling dsDNA into and through the RuvAB complex. RuvB forms 2 homohexamers on either side of HJ DNA bound by 1 or 2 RuvA tetramers; 4 subunits per hexamer contact DNA at a time. Coordinated motions by a converter formed by DNA-disengaged RuvB subunits stimulates ATP hydrolysis and nucleotide exchange. Immobilization of the converter enables RuvB to convert the ATP-contained energy into a lever motion, pulling 2 nucleotides of DNA out of the RuvA tetramer per ATP hydrolyzed, thus driving DNA branch migration. The RuvB motors rotate together with the DNA substrate, which together with the progressing nucleotide cycle form the mechanistic basis for DNA recombination by continuous HJ branch migration. Branch migration allows RuvC to scan DNA until it finds its consensus sequence, where it cleaves and resolves cruciform DNA. The sequence is that of Holliday junction branch migration complex subunit RuvB from Pseudomonas putida (strain GB-1).